The chain runs to 489 residues: Betaine aldehyde dehydrogenase (489 aa).

The K(+) site is built by Thr-26 and Asp-93. Residue 150–152 (GAW) coordinates NAD(+). Lys-162 functions as the Charge relay system in the catalytic mechanism. NAD(+) is bound at residue 176-179 (KPSE). Val-180 contributes to the K(+) binding site. 229 to 232 (GVET) lines the NAD(+) pocket. Leu-245 contributes to the K(+) binding site. Glu-251 acts as the Proton acceptor in catalysis. NAD(+) is bound by residues Gly-253, Cys-285, and Glu-386. The active-site Nucleophile is Cys-285. Cys-285 is subject to Cysteine sulfenic acid (-SOH). Residues Lys-456 and Gly-459 each contribute to the K(+) site. The active-site Charge relay system is the Glu-463.

Belongs to the aldehyde dehydrogenase family. In terms of assembly, dimer of dimers. The cofactor is K(+).

It catalyses the reaction betaine aldehyde + NAD(+) + H2O = glycine betaine + NADH + 2 H(+). It participates in amine and polyamine biosynthesis; betaine biosynthesis via choline pathway; betaine from betaine aldehyde: step 1/1. Involved in the biosynthesis of the osmoprotectant glycine betaine. Catalyzes the irreversible oxidation of betaine aldehyde to the corresponding acid. This is Betaine aldehyde dehydrogenase from Burkholderia lata (strain ATCC 17760 / DSM 23089 / LMG 22485 / NCIMB 9086 / R18194 / 383).